A 291-amino-acid chain; its full sequence is 4-diphosphocytidyl-2-C-methyl-D-erythritol kinase (291 aa).

Lysine 8 is a catalytic residue. 89-99 provides a ligand contact to ATP; sequence PIGSGIGGGSS. Residue aspartate 131 is part of the active site.

This sequence belongs to the GHMP kinase family. IspE subfamily.

It carries out the reaction 4-CDP-2-C-methyl-D-erythritol + ATP = 4-CDP-2-C-methyl-D-erythritol 2-phosphate + ADP + H(+). It participates in isoprenoid biosynthesis; isopentenyl diphosphate biosynthesis via DXP pathway; isopentenyl diphosphate from 1-deoxy-D-xylulose 5-phosphate: step 3/6. In terms of biological role, catalyzes the phosphorylation of the position 2 hydroxy group of 4-diphosphocytidyl-2C-methyl-D-erythritol. The protein is 4-diphosphocytidyl-2-C-methyl-D-erythritol kinase of Chlamydia abortus (strain DSM 27085 / S26/3) (Chlamydophila abortus).